Reading from the N-terminus, the 740-residue chain is Polyribonucleotide nucleotidyltransferase (740 aa).

Residues Asp514 and Asp520 each coordinate Mg(2+). The region spanning 580–639 (PRIITVKIPVDKIGEVIGPKRQMINQIQEDTGAEITIEDDGTIYIGAADGPAAEAARATI) is the KH domain. The region spanning 651–723 (GERILGSVVK…SRGKLSLIPV (73 aa)) is the S1 motif domain.

Belongs to the polyribonucleotide nucleotidyltransferase family. Homotrimer. Requires Mg(2+) as cofactor.

The protein localises to the cytoplasm. The enzyme catalyses RNA(n+1) + phosphate = RNA(n) + a ribonucleoside 5'-diphosphate. In terms of biological role, involved in mRNA degradation. Catalyzes the phosphorolysis of single-stranded polyribonucleotides processively in the 3'- to 5'-direction. This chain is Polyribonucleotide nucleotidyltransferase, found in Streptomyces antibioticus.